The chain runs to 872 residues: C-mannosyltransferase dpy-19 homolog (872 aa).

Transmembrane regions (helical) follow at residues 4–24 (PNLY…FLYV), 126–146 (FVWL…TLLS), 149–169 (IFGG…VAKI), 179–199 (FAFP…GRII), 211–231 (IFAM…STFI), 257–277 (VLDY…MSHG), 279–299 (SQLL…ITMV), 326–346 (FLML…ELFN), and 399–419 (VKTM…AMFF). The stretch at 508–535 (KRLRAQINRNSVKQRKERAQETKEAATD) forms a coiled coil. The disordered stretch occupies residues 514–620 (INRNSVKQRK…RSSSRRSSVV (107 aa)). A compositionally biased stretch (basic and acidic residues) spans 524-533 (ERAQETKEAA). The segment covering 541-551 (TEEEDKDPEAE) has biased composition (acidic residues). 2 helical membrane-spanning segments follow: residues 627-647 (ILNM…LIGL) and 678-698 (NIFW…PGMV).

Belongs to the dpy-19 family.

It is found in the membrane. Its function is as follows. Probable C-mannosyltransferase that mediates C-mannosylation of tryptophan residues on target proteins. The protein is C-mannosyltransferase dpy-19 homolog of Drosophila melanogaster (Fruit fly).